Reading from the N-terminus, the 305-residue chain is tRNA pseudouridine synthase B (305 aa).

D48 serves as the catalytic Nucleophile.

Belongs to the pseudouridine synthase TruB family. Type 1 subfamily.

It catalyses the reaction uridine(55) in tRNA = pseudouridine(55) in tRNA. Its function is as follows. Responsible for synthesis of pseudouridine from uracil-55 in the psi GC loop of transfer RNAs. This is tRNA pseudouridine synthase B from Pseudomonas fluorescens (strain Pf0-1).